A 101-amino-acid polypeptide reads, in one-letter code: Small ribosomal subunit protein uS14 (101 aa).

Belongs to the universal ribosomal protein uS14 family. Part of the 30S ribosomal subunit. Contacts proteins S3 and S10.

In terms of biological role, binds 16S rRNA, required for the assembly of 30S particles and may also be responsible for determining the conformation of the 16S rRNA at the A site. This is Small ribosomal subunit protein uS14 from Proteus mirabilis (strain HI4320).